Reading from the N-terminus, the 376-residue chain is Alpha-2,8-sialyltransferase 8E (376 aa).

At 1–17 (MRYADPSANRDLLGSRT) the chain is on the cytoplasmic side. A helical; Signal-anchor for type II membrane protein membrane pass occupies residues 18–38 (LLFIFICAFALVTLLQQILYG). The Lumenal segment spans residues 39-376 (RNYIKRYFEF…RVHTGTCSCC (338 aa)). Residues asparagine 56 and asparagine 96 are each glycosylated (N-linked (GlcNAc...) asparagine). Intrachain disulfides connect cysteine 164–cysteine 313 and cysteine 178–cysteine 373. Substrate is bound by residues asparagine 192 and 214 to 216 (NPS). Residues asparagine 241 and asparagine 284 are each glycosylated (N-linked (GlcNAc...) asparagine). Position 300 to 302 (300 to 302 (STG)) interacts with substrate. Residue histidine 348 is the Proton donor/acceptor of the active site.

Belongs to the glycosyltransferase 29 family. In terms of tissue distribution, expressed in fetal and adult brain, adult heart and skeletal muscle. Expressed in fetal and adult brain, not detected in adult heart and skeletal muscle.

The protein localises to the golgi apparatus membrane. It catalyses the reaction a ganglioside GT1b (d18:1(4E)) + CMP-N-acetyl-beta-neuraminate = a ganglioside GQ1b (d18:1(4E)) + CMP + H(+). The catalysed reaction is a ganglioside GD3 (d18:1(4E)) + CMP-N-acetyl-beta-neuraminate = a ganglioside GT3 (d18:1(4E)) + CMP + H(+). The enzyme catalyses a ganglioside GD1a (d18:1(4E)) + CMP-N-acetyl-beta-neuraminate = a ganglioside GT1a (d18:1(4E)) + CMP + H(+). It carries out the reaction a ganglioside GM1b (d18:1(4E)) + CMP-N-acetyl-beta-neuraminate = a ganglioside GD1c (d18:1(4E)) + CMP + H(+). It catalyses the reaction a ganglioside GQ1c (d18:1(4E)) + CMP-N-acetyl-beta-neuraminate = a ganglioside GP1c (d18:1(4E)) + CMP + H(+). The protein operates within protein modification; protein glycosylation. Its function is as follows. Involved in the synthesis of gangliosides GD1c, GT1a, GQ1b, GP1c and GT3 from GD1a, GT1b, GM1b and GD3 respectively. The polypeptide is Alpha-2,8-sialyltransferase 8E (Homo sapiens (Human)).